The primary structure comprises 454 residues: Kynurenine--oxoglutarate transaminase 3 (454 aa).

Phenylalanine 2 is modified (N-acetylserine). Residue glycine 71 coordinates substrate. Lysine 116 is subject to N6-acetyllysine; alternate. Lysine 116 is modified (N6-succinyllysine; alternate). Residue asparagine 218 coordinates substrate. Lysine 280 carries the post-translational modification N6-(pyridoxal phosphate)lysine. Position 429 (arginine 429) interacts with substrate.

Belongs to the class-I pyridoxal-phosphate-dependent aminotransferase family. Homodimer. The cofactor is pyridoxal 5'-phosphate.

It carries out the reaction L-kynurenine + 2-oxoglutarate = kynurenate + L-glutamate + H2O. It catalyses the reaction L-kynurenine + glyoxylate = kynurenate + glycine + H2O. The enzyme catalyses 3-hydroxy-L-kynurenine + glyoxylate = xanthurenate + glycine + H2O. The catalysed reaction is an S-substituted L-cysteine + H2O = a thiol + pyruvate + NH4(+). It participates in amino-acid degradation; L-kynurenine degradation; kynurenate from L-kynurenine: step 1/2. Catalyzes the irreversible transamination of the L-tryptophan metabolite L-kynurenine to form kynurenic acid (KA), an intermediate in the tryptophan catabolic pathway which is also a broad spectrum antagonist of the three ionotropic excitatory amino acid receptors among others. May catalyze the beta-elimination of S-conjugates and Se-conjugates of L-(seleno)cysteine, resulting in the cleavage of the C-S or C-Se bond. Has transaminase activity towards L-kynurenine, tryptophan, phenylalanine, serine, cysteine, methionine, histidine, glutamine and asparagine with glyoxylate as an amino group acceptor (in vitro). Has lower activity with 2-oxoglutarate as amino group acceptor (in vitro). In Homo sapiens (Human), this protein is Kynurenine--oxoglutarate transaminase 3.